We begin with the raw amino-acid sequence, 264 residues long: tRNA (guanine-N(1)-)-methyltransferase (264 aa).

S-adenosyl-L-methionine is bound by residues glycine 125 and 145-150; that span reads LGDFVL.

It belongs to the RNA methyltransferase TrmD family. In terms of assembly, homodimer.

Its subcellular location is the cytoplasm. The catalysed reaction is guanosine(37) in tRNA + S-adenosyl-L-methionine = N(1)-methylguanosine(37) in tRNA + S-adenosyl-L-homocysteine + H(+). Functionally, specifically methylates guanosine-37 in various tRNAs. The polypeptide is tRNA (guanine-N(1)-)-methyltransferase (Burkholderia cenocepacia (strain ATCC BAA-245 / DSM 16553 / LMG 16656 / NCTC 13227 / J2315 / CF5610) (Burkholderia cepacia (strain J2315))).